The primary structure comprises 201 residues: Large ribosomal subunit protein uL4 (201 aa).

The disordered stretch occupies residues 45 to 72 (AQKTRAEVTGSGKKPWRQKGTGRARAGS).

The protein belongs to the universal ribosomal protein uL4 family. Part of the 50S ribosomal subunit.

In terms of biological role, one of the primary rRNA binding proteins, this protein initially binds near the 5'-end of the 23S rRNA. It is important during the early stages of 50S assembly. It makes multiple contacts with different domains of the 23S rRNA in the assembled 50S subunit and ribosome. Its function is as follows. Forms part of the polypeptide exit tunnel. The sequence is that of Large ribosomal subunit protein uL4 from Shewanella frigidimarina (strain NCIMB 400).